We begin with the raw amino-acid sequence, 63 residues long: MPQLDTSMWLLTILSMLLTLFVLFQLKISKHSYSPNPKLAHTKTQKQQAPWNTTWTKIYLPLL.

Residues 8–24 (MWLLTILSMLLTLFVLF) traverse the membrane as a helical segment. At Lys-57 the chain carries N6-acetyllysine.

It belongs to the ATPase protein 8 family. Component of the ATP synthase complex composed at least of ATP5F1A/subunit alpha, ATP5F1B/subunit beta, ATP5MC1/subunit c (homooctomer), MT-ATP6/subunit a, MT-ATP8/subunit 8, ATP5ME/subunit e, ATP5MF/subunit f, ATP5MG/subunit g, ATP5MK/subunit k, ATP5MJ/subunit j, ATP5F1C/subunit gamma, ATP5F1D/subunit delta, ATP5F1E/subunit epsilon, ATP5PF/subunit F6, ATP5PB/subunit b, ATP5PD/subunit d, ATP5PO/subunit OSCP. ATP synthase complex consists of a soluble F(1) head domain (subunits alpha(3) and beta(3)) - the catalytic core - and a membrane F(0) domain - the membrane proton channel (subunits c, a, 8, e, f, g, k and j). These two domains are linked by a central stalk (subunits gamma, delta, and epsilon) rotating inside the F1 region and a stationary peripheral stalk (subunits F6, b, d, and OSCP). Interacts with PRICKLE3.

It localises to the mitochondrion membrane. Subunit 8, of the mitochondrial membrane ATP synthase complex (F(1)F(0) ATP synthase or Complex V) that produces ATP from ADP in the presence of a proton gradient across the membrane which is generated by electron transport complexes of the respiratory chain. ATP synthase complex consist of a soluble F(1) head domain - the catalytic core - and a membrane F(1) domain - the membrane proton channel. These two domains are linked by a central stalk rotating inside the F(1) region and a stationary peripheral stalk. During catalysis, ATP synthesis in the catalytic domain of F(1) is coupled via a rotary mechanism of the central stalk subunits to proton translocation. In vivo, can only synthesize ATP although its ATP hydrolase activity can be activated artificially in vitro. Part of the complex F(0) domain. This is ATP synthase F(0) complex subunit 8 from Balaenoptera physalus (Fin whale).